Reading from the N-terminus, the 921-residue chain is Isoleucine--tRNA ligase (921 aa).

The short motif at 57–67 (PYANGDIHMGH) is the 'HIGH' region element. Glutamate 552 provides a ligand contact to L-isoleucyl-5'-AMP. The 'KMSKS' region motif lies at 593–597 (KMSKS). Lysine 596 contacts ATP. Zn(2+) is bound by residues cysteine 888, cysteine 891, cysteine 908, and cysteine 911.

The protein belongs to the class-I aminoacyl-tRNA synthetase family. IleS type 1 subfamily. As to quaternary structure, monomer. Zn(2+) serves as cofactor.

The protein resides in the cytoplasm. It carries out the reaction tRNA(Ile) + L-isoleucine + ATP = L-isoleucyl-tRNA(Ile) + AMP + diphosphate. In terms of biological role, catalyzes the attachment of isoleucine to tRNA(Ile). As IleRS can inadvertently accommodate and process structurally similar amino acids such as valine, to avoid such errors it has two additional distinct tRNA(Ile)-dependent editing activities. One activity is designated as 'pretransfer' editing and involves the hydrolysis of activated Val-AMP. The other activity is designated 'posttransfer' editing and involves deacylation of mischarged Val-tRNA(Ile). The polypeptide is Isoleucine--tRNA ligase (Bacillus cytotoxicus (strain DSM 22905 / CIP 110041 / 391-98 / NVH 391-98)).